The primary structure comprises 240 residues: Ribosomal RNA small subunit methyltransferase G (240 aa).

S-adenosyl-L-methionine is bound by residues glycine 77, phenylalanine 82, 128-129 (AE), and arginine 148. The segment at 217-240 (EKRSKTPKKYPRKAGTPNKSPLLK) is disordered.

It belongs to the methyltransferase superfamily. RNA methyltransferase RsmG family.

The protein localises to the cytoplasm. Specifically methylates the N7 position of guanine in position 535 of 16S rRNA. The sequence is that of Ribosomal RNA small subunit methyltransferase G from Staphylococcus carnosus (strain TM300).